The following is a 422-amino-acid chain: Growth arrest-specific protein 7 (422 aa).

The tract at residues 1-117 (MATALQKPGM…SPGRKQSKEN (117 aa)) is disordered. The WW domain occupies 22–55 (VILPPGWHSYLSPQGRRYYVNTTTNETTWERPSS). Residues 41–52 (VNTTTNETTWER) are compositionally biased toward polar residues. Positions 53–65 (PSSSPGISASPGP) are enriched in low complexity. A phosphoserine mark is found at S62 and S108. A compositionally biased stretch (polar residues) spans 95–117 (RKSTGDSQNLGSSSPGRKQSKEN). The region spanning 141-402 (TEWSYCDYFW…LLRKVDPAKD (262 aa)) is the F-BAR domain. The stretch at 254-329 (ENFKKDMKKC…RKSTQAGDDL (76 aa)) forms a coiled coil.

It is found in the cytoplasm. In terms of biological role, may play a role in promoting maturation and morphological differentiation of cerebellar neurons. In Rattus norvegicus (Rat), this protein is Growth arrest-specific protein 7 (Gas7).